The sequence spans 38 residues: Large ribosomal subunit protein bL36 (38 aa).

It belongs to the bacterial ribosomal protein bL36 family.

The protein is Large ribosomal subunit protein bL36 of Porphyromonas gingivalis (strain ATCC 33277 / DSM 20709 / CIP 103683 / JCM 12257 / NCTC 11834 / 2561).